Here is a 2863-residue protein sequence, read N- to C-terminus: Lipopolysaccharide-responsive and beige-like anchor protein (2863 aa).

Disordered stretches follow at residues 1-35 (MASEDNRVPSPPPTGDDGGGGGREETPTEGGALSL), 969-1005 (VGSQQPDTKDSPVCPHFTTNGNENSSIEKTSSLESAS), and 1018-1039 (EMKAEQENQELPDEGTLEETLT). Ala2 is subject to N-acetylalanine. A phosphoserine mark is found at Ser10, Ser979, and Ser1003. Polar residues predominate over residues 985-1005 (FTTNGNENSSIEKTSSLESAS). A coiled-coil region spans residues 1006–1053 (NIELQTTNTSYEEMKAEQENQELPDEGTLEETLTNETRNADDLEVSSD). Residues 1024–1034 (ENQELPDEGTL) are compositionally biased toward acidic residues. Phosphoserine occurs at positions 1100, 1135, and 1139. Residues 1161-1176 (PVTEKQTDTETQDSKD) show a composition bias toward basic and acidic residues. Residues 1161-1193 (PVTEKQTDTETQDSKDSGIQTMTASGSSAMSPE) form a disordered region. Polar residues predominate over residues 1177-1193 (SGIQTMTASGSSAMSPE). A phosphoserine mark is found at Ser1233, Ser1247, and Ser1261. The WD 1 repeat unit spans residues 1301-1343 (STVFRIPEFNWSQMHQRLLTDLLFSIETDIQMWRSHSTKTVMD). Phosphoserine is present on residues Ser1488 and Ser1498. Residues 1531–1548 (FLALAVVYFISVLMVSKY) traverse the membrane as a helical segment. Low complexity predominate over residues 1586-1599 (LTTASVEESESTSS). Disordered stretches follow at residues 1586 to 1668 (LTTA…KATP) and 1759 to 1789 (QASDMGGESPGSRSSNAKLPSVPTVDSVSQD). A Phosphoserine modification is found at Ser1605. Over residues 1650–1664 (KSPETKNDRGNDLDT) the composition is skewed to basic and acidic residues. 3 positions are modified to phosphoserine: Ser1767, Ser1770, and Ser2064. The span at 1769–1789 (GSRSSNAKLPSVPTVDSVSQD) shows a compositional bias: polar residues. The BEACH-type PH domain occupies 2073-2181 (NLAGPVSLST…TVKKVVNYLP (109 aa)). Residues 2200–2489 (ASPRQLFKAS…QLLIEPHPPR (290 aa)) enclose the BEACH domain. Ser2496 is modified (phosphoserine). WD repeat units follow at residues 2591–2633 (DQSI…LIQV), 2636–2679 (GHWD…SGIG), 2695–2735 (GHDY…RTLE), 2777–2816 (ETDDNIRAIQLSRDGQYLLTGGDRGVVVVRQVSDLKQLFA), and 2819–2858 (GCDAGIRAMALSYDQRCIISGMASGSIVLFYNDFNRWHHE).

As to quaternary structure, interacts with TOM1 and TOLLIP. Ubiquitous.

The protein resides in the cell membrane. The protein localises to the endoplasmic reticulum membrane. It is found in the golgi apparatus. Its subcellular location is the trans-Golgi network membrane. It localises to the lysosome membrane. Involved in coupling signal transduction and vesicle trafficking to enable polarized secretion and/or membrane deposition of immune effector molecules. Involved in phagophore growth during mitophagy by regulating ATG9A trafficking to mitochondria. This Homo sapiens (Human) protein is Lipopolysaccharide-responsive and beige-like anchor protein.